The primary structure comprises 152 residues: UPF0266 membrane protein KPN78578_23010 (152 aa).

3 consecutive transmembrane segments (helical) span residues 6–26 (LVII…QFIM), 45–65 (VDGM…ITQH), and 67–87 (TAIT…LFWI).

The protein belongs to the UPF0266 family.

The protein resides in the cell inner membrane. The protein is UPF0266 membrane protein KPN78578_23010 of Klebsiella pneumoniae subsp. pneumoniae (strain ATCC 700721 / MGH 78578).